Consider the following 295-residue polypeptide: 4-diphosphocytidyl-2-C-methyl-D-erythritol kinase (295 aa).

Lysine 15 is a catalytic residue. 101 to 111 (PIAAGLGGGSS) provides a ligand contact to ATP. Aspartate 143 is a catalytic residue.

It belongs to the GHMP kinase family. IspE subfamily.

The catalysed reaction is 4-CDP-2-C-methyl-D-erythritol + ATP = 4-CDP-2-C-methyl-D-erythritol 2-phosphate + ADP + H(+). It functions in the pathway isoprenoid biosynthesis; isopentenyl diphosphate biosynthesis via DXP pathway; isopentenyl diphosphate from 1-deoxy-D-xylulose 5-phosphate: step 3/6. Its function is as follows. Catalyzes the phosphorylation of the position 2 hydroxy group of 4-diphosphocytidyl-2C-methyl-D-erythritol. This Caulobacter vibrioides (strain ATCC 19089 / CIP 103742 / CB 15) (Caulobacter crescentus) protein is 4-diphosphocytidyl-2-C-methyl-D-erythritol kinase.